We begin with the raw amino-acid sequence, 1400 residues long: DNA-directed RNA polymerase subunit beta' (1400 aa).

4 residues coordinate Zn(2+): Cys71, Cys73, Cys86, and Cys89. Residues Asp462, Asp464, and Asp466 each contribute to the Mg(2+) site. Zn(2+) is bound by residues Cys811, Cys885, Cys892, and Cys895.

Belongs to the RNA polymerase beta' chain family. In terms of assembly, the RNAP catalytic core consists of 2 alpha, 1 beta, 1 beta' and 1 omega subunit. When a sigma factor is associated with the core the holoenzyme is formed, which can initiate transcription. Mg(2+) is required as a cofactor. Requires Zn(2+) as cofactor.

It carries out the reaction RNA(n) + a ribonucleoside 5'-triphosphate = RNA(n+1) + diphosphate. In terms of biological role, DNA-dependent RNA polymerase catalyzes the transcription of DNA into RNA using the four ribonucleoside triphosphates as substrates. This chain is DNA-directed RNA polymerase subunit beta', found in Brucella ovis (strain ATCC 25840 / 63/290 / NCTC 10512).